The sequence spans 213 residues: Uridine kinase (213 aa).

13 to 20 (GASASGKS) is an ATP binding site.

This sequence belongs to the uridine kinase family.

Its subcellular location is the cytoplasm. It catalyses the reaction uridine + ATP = UMP + ADP + H(+). The catalysed reaction is cytidine + ATP = CMP + ADP + H(+). It participates in pyrimidine metabolism; CTP biosynthesis via salvage pathway; CTP from cytidine: step 1/3. Its pathway is pyrimidine metabolism; UMP biosynthesis via salvage pathway; UMP from uridine: step 1/1. The protein is Uridine kinase of Histophilus somni (strain 129Pt) (Haemophilus somnus).